Reading from the N-terminus, the 453-residue chain is Bifunctional protein GlmU (453 aa).

The pyrophosphorylase stretch occupies residues Met-1–Arg-226. UDP-N-acetyl-alpha-D-glucosamine contacts are provided by residues Leu-7–Gly-10, Lys-21, Gln-73, and Gly-78–Thr-79. Residue Asp-103 coordinates Mg(2+). UDP-N-acetyl-alpha-D-glucosamine is bound by residues Gly-140, Glu-155, Asn-170, and Asn-224. Mg(2+) is bound at residue Asn-224. A linker region spans residues Lys-227–Ala-247. Positions Gly-248–Thr-453 are N-acetyltransferase. Residues Arg-329 and Lys-347 each contribute to the UDP-N-acetyl-alpha-D-glucosamine site. His-359 acts as the Proton acceptor in catalysis. UDP-N-acetyl-alpha-D-glucosamine-binding residues include Tyr-362 and Asn-373. Acetyl-CoA-binding positions include Ala-376, Asn-382–Tyr-383, Ser-401, Ala-419, and Arg-436.

This sequence in the N-terminal section; belongs to the N-acetylglucosamine-1-phosphate uridyltransferase family. In the C-terminal section; belongs to the transferase hexapeptide repeat family. As to quaternary structure, homotrimer. Requires Mg(2+) as cofactor.

It localises to the cytoplasm. It catalyses the reaction alpha-D-glucosamine 1-phosphate + acetyl-CoA = N-acetyl-alpha-D-glucosamine 1-phosphate + CoA + H(+). The catalysed reaction is N-acetyl-alpha-D-glucosamine 1-phosphate + UTP + H(+) = UDP-N-acetyl-alpha-D-glucosamine + diphosphate. It participates in nucleotide-sugar biosynthesis; UDP-N-acetyl-alpha-D-glucosamine biosynthesis; N-acetyl-alpha-D-glucosamine 1-phosphate from alpha-D-glucosamine 6-phosphate (route II): step 2/2. It functions in the pathway nucleotide-sugar biosynthesis; UDP-N-acetyl-alpha-D-glucosamine biosynthesis; UDP-N-acetyl-alpha-D-glucosamine from N-acetyl-alpha-D-glucosamine 1-phosphate: step 1/1. The protein operates within bacterial outer membrane biogenesis; LPS lipid A biosynthesis. Its function is as follows. Catalyzes the last two sequential reactions in the de novo biosynthetic pathway for UDP-N-acetylglucosamine (UDP-GlcNAc). The C-terminal domain catalyzes the transfer of acetyl group from acetyl coenzyme A to glucosamine-1-phosphate (GlcN-1-P) to produce N-acetylglucosamine-1-phosphate (GlcNAc-1-P), which is converted into UDP-GlcNAc by the transfer of uridine 5-monophosphate (from uridine 5-triphosphate), a reaction catalyzed by the N-terminal domain. This is Bifunctional protein GlmU from Cyanothece sp. (strain PCC 7425 / ATCC 29141).